The primary structure comprises 1017 residues: Ubiquitin-like modifier-activating enzyme 1 (1017 aa).

2 consecutive repeat copies span residues 26–163 (SHET…GQLF) and 419–571 (GKTL…QVVV). The interval 26–571 (SHETMKKITS…GTKGNTQVVV (546 aa)) is 2 approximate repeats. ATP-binding positions include A438, D464, R475, K488, and 536–537 (DN). The Glycyl thioester intermediate role is filled by C592. Positions 765–781 (IQTSENEPAPSSNTQQA) are enriched in polar residues. The segment at 765–788 (IQTSENEPAPSSNTQQAGGDAEDD) is disordered.

It belongs to the ubiquitin-activating E1 family. As to quaternary structure, monomer.

The enzyme catalyses ATP + ubiquitin + [E1 ubiquitin-activating enzyme]-L-cysteine = AMP + diphosphate + S-ubiquitinyl-[E1 ubiquitin-activating enzyme]-L-cysteine.. It functions in the pathway protein modification; protein ubiquitination. Functionally, catalyzes the first step in ubiquitin conjugation to mark cellular proteins for degradation through the ubiquitin-proteasome system. Activates ubiquitin by first adenylating its C-terminal glycine residue with ATP, and thereafter linking this residue to the side chain of a cysteine residue in E1, yielding a ubiquitin-E1 thioester and free AMP. In Dictyostelium discoideum (Social amoeba), this protein is Ubiquitin-like modifier-activating enzyme 1 (uba1).